The chain runs to 440 residues: 2-methylisoborneol synthase (440 aa).

Disordered regions lie at residues 1-33 and 46-74; these read MPDS…IPSA and LHPP…TVTG. Composition is skewed to pro residues over residues 9–29 and 50–63; these read TPPP…PAPV and VTVP…PPAP. 6 residues coordinate Mg(2+): D197, D198, E202, N345, S349, and E353.

This sequence belongs to the terpene synthase family. 2-methylisoborneol synthase subfamily. Mg(2+) serves as cofactor.

The catalysed reaction is (E)-2-methylgeranyl diphosphate + H2O = 2-methylisoborneol + diphosphate. Functionally, catalyzes the cyclization of 2-methylgeranyl diphosphate (2-MeGPP) to 2-methylisoborneol (2-MIB), which likely involves the intermediacy of 2-methyllinalyl diphosphate. Is also able to catalyze the cyclization of geranyl diphosphate (GPP), albeit with much lower efficiency, leading to the formation of a complex mixture of cyclic monoterpenes, consisting of alpha-pinene (6%), beta-pinene (23%), limonene (32%), gamma-terpinene (29%), and delta-terpinene (10%). In Streptomyces coelicolor (strain ATCC BAA-471 / A3(2) / M145), this protein is 2-methylisoborneol synthase.